Reading from the N-terminus, the 155-residue chain is Ribosomal RNA large subunit methyltransferase H (155 aa).

Residues Leu-72, Gly-103, and Leu-122–Leu-127 contribute to the S-adenosyl-L-methionine site.

The protein belongs to the RNA methyltransferase RlmH family. In terms of assembly, homodimer.

It localises to the cytoplasm. The catalysed reaction is pseudouridine(1915) in 23S rRNA + S-adenosyl-L-methionine = N(3)-methylpseudouridine(1915) in 23S rRNA + S-adenosyl-L-homocysteine + H(+). Functionally, specifically methylates the pseudouridine at position 1915 (m3Psi1915) in 23S rRNA. In Haemophilus influenzae (strain PittEE), this protein is Ribosomal RNA large subunit methyltransferase H.